Here is a 267-residue protein sequence, read N- to C-terminus: MHSPTFSMVKIKTASQDYLPIPVAVTKASRLKHGRTLKLMTAHGLKIRVKVAEARDKLYMTIGWKEFIQEAGLKMGESKSVVFRTLSKSRLNVIIFNKEGYSRCPIPDKAAKALINNQSSSAPSFSTKSTAPRHPSFTNVEANTKRIVKDMCCYNKRMKLSSEVKNYVRDIAQFLDYSSKFYIVTMKNIHEVRQGDGCYNLKAGYGQISHKIIFKEIYSATSTASQQDTSGKNLHFSLPQDESVAGNSTSPVNAMFMPCTSNILLLL.

A DNA-binding region (TF-B3) is located at residues 4–99 (PTFSMVKIKT…RLNVIIFNKE (96 aa)).

It is found in the nucleus. The polypeptide is Putative B3 domain-containing protein LOC_Os07g12820 (Oryza sativa subsp. japonica (Rice)).